A 1338-amino-acid chain; its full sequence is MSVQTATTENRFQSTLDDNNGNNSESKNIARCPKYEWNANVNDQGPGVIDHSILDQQSDNEINKHYLLQSPNALELDSTLDYIGNAAGHCDTFNLKADKGCKTVNSSLLHENPGEEDETVDYINNELCNKMQDTLCPPSIPIQTSASDEIHKGLGAITDRGSAYNKIAEQSLCVQESTDYLCKMEPKWTVQAFFGDADKLCRNEANNLVDISTTDHKYDHNSSFGIFTLSLDFSDEKCMREDSLVLSGSEKPLSASILEGSALPNSSIDVFTGSVKKTDNIDGFCQGAELSLRDLDYLEVPHQKDSTETPQSKLSLTSEHSVFTSETSEVMLEVDARRVMDKTVESHLPNLRLSSNVGKEDSAPGASLEEFVSGSVPAVAPEELASNLIKDKNTIKNKESHGEAHSLESPARPDSSSSELKDLLSNLSGQNCEDTFIISSPNSGIGSKAFTSTPLPESKNMTFSVPVLESITENNELQQNLDAIKYDLEGLRHSSDSNIVTKPTNKKPAVGSVVGKAKKNEVISFPKPSFKNVKAKVLTRPSLQAKDSNPYASKTSPRSPPSLSNASSPAQSPRPLSSAVKTVQKRSVINQDMKTEAAIAKSQKQPITKQLFPTHSAHVPTHSKHALGKVPRAAALKHTQNETERASSSNSTRSSGSAAAALTCTAGSRVTENKSEKAKTSAKPSAPNVRLMGPNKIEQKGIIQPHFDKAQSLKEAKEGTVSADMDILANIVPLPTKLAIPSSRNLHKELILGIKNVASQPAKGRVQTTVQRRGSLGKNILTIRVSSPPREKPQVTVEGGLNSPKGRPISVKASAANGTGSLPRTRLPCRGTTLQRTASVSSVCSTQSELSNLSTRSTTTTSSIKTEDIPTAKCIRPNSASGALTAKSSIPRGRSQSLKVTQTVTGTKKSPSIIPTLPRSSGPALSLTKKLEARSLQNVEKNKQKTSPRGPVTQAQTPPVDPKSIELTKCKAACEQQRGVIENLKNLLSSSNQRFEALTVVVQQLINQREETLKKRKALSQELLNLRGDLVCASSTCERLEKEKNELLKAYEGILQKVKEEHHAELSDLEEKLKQFYTGECEKLQSIFIEEAEKYKNELQEKVDDLNTTHEAYRLQAETSQIETIHTLKEDYEKSLTELKDAKDKENKILEDSFKEKQAEVEKKILELKDVNESLKEKLKYEEEQRKLTKEKSVQKNPQVMYLEQELESLKAVLEIKNEKLHQQDKKLMQVEKLVETNTTLVERLNKCQQENEDLKARMVNHVALSRQLSTEQEVLQRSLEKESKANKRLSMENEELLWKLHNGDLCSPKKLSPSSPGIPFHPSRNSGSFSSPTVSPR.

Residues 1–27 show a composition bias toward polar residues; it reads MSVQTATTENRFQSTLDDNNGNNSESK. 2 disordered regions span residues 1-28 and 399-421; these read MSVQ…ESKN and ESHG…SELK. Residues 469 to 494 adopt a coiled-coil conformation; it reads ESITENNELQQNLDAIKYDLEGLRHS. Disordered stretches follow at residues 536-585 and 636-695; these read KVLT…TVQK and LKHT…MGPN. Positions 541-555 are enriched in polar residues; it reads PSLQAKDSNPYASKT. 2 stretches are compositionally biased toward low complexity: residues 561–573 and 646–661; these read PSLS…AQSP and ASSS…AAAA. The 44-residue stretch at 731–774 folds into the F-box domain; the sequence is IVPLPTKLAIPSSRNLHKELILGIKNVASQPAKGRVQTTVQRRG. 3 disordered regions span residues 788–808, 883–925, and 938–962; these read PPRE…KGRP, ALTA…GPAL, and NVEK…PVDP. The segment covering 883–910 has biased composition (polar residues); that stretch reads ALTAKSSIPRGRSQSLKVTQTVTGTKKS. Residues 966–1298 adopt a coiled-coil conformation; sequence ELTKCKAACE…RLSMENEELL (333 aa). The interval 1309 to 1338 is disordered; it reads PKKLSPSSPGIPFHPSRNSGSFSSPTVSPR. Polar residues predominate over residues 1324–1338; it reads SRNSGSFSSPTVSPR.

Belongs to the MTUS1 family. Homodimer. Binds microtubules. Interacts with kif2c, aurkb, incenp and SKP1. Probably part of a SCF (SKP1-CUL1-F-box) protein ligase complex. As to expression, present in egg (at protein level).

Its subcellular location is the nucleus. The protein resides in the cytoplasm. The protein localises to the cytoskeleton. It is found in the chromosome. It localises to the midbody. Functionally, regulates microtubule dynamics during mitosis by stimulating kif2c. Probably recognizes and binds to some phosphorylated proteins and promotes their ubiquitination and degradation. This is Microtubule-associated tumor suppressor 1 homolog (mtus1) from Xenopus laevis (African clawed frog).